The primary structure comprises 149 residues: MADQLSEEQISEFKEAFSLFDKDGDGTITTKELGTVMRSLGQNPTEAELQDMINEVDADGNGTIDFPEFLTMMARKMRDTDSEEEIKEAFKVFDKDGNGYISAAELRHVMTNLGEKLTDNEVDEMIREADVDGDGQINYEEFVKMMLSK.

Residue Ala2 is modified to N-acetylalanine. EF-hand domains lie at 8–43 (EQIS…LGQN), 44–79 (PTEA…KMRD), 81–116 (DSEE…LGEK), and 117–149 (LTDN…MLSK). Positions 21, 23, 25, 27, 32, 57, 59, 61, 63, 68, 94, 96, 98, 100, 105, 130, 132, 134, 136, and 141 each coordinate Ca(2+).

This sequence belongs to the calmodulin family.

Calmodulin mediates the control of a large number of enzymes, ion channels and other proteins by Ca(2+). Among the enzymes to be stimulated by the calmodulin-Ca(2+) complex are a number of protein kinases and phosphatases. In Pleurotus ostreatus (Oyster mushroom), this protein is Calmodulin (CMD1).